Here is a 356-residue protein sequence, read N- to C-terminus: Peptide chain release factor 1 (356 aa).

Position 233 is an N5-methylglutamine (Q233).

Belongs to the prokaryotic/mitochondrial release factor family. Post-translationally, methylated by PrmC. Methylation increases the termination efficiency of RF1.

It localises to the cytoplasm. In terms of biological role, peptide chain release factor 1 directs the termination of translation in response to the peptide chain termination codons UAG and UAA. The chain is Peptide chain release factor 1 from Syntrophotalea carbinolica (strain DSM 2380 / NBRC 103641 / GraBd1) (Pelobacter carbinolicus).